The sequence spans 629 residues: Hemocyanin C chain (629 aa).

Histidine 175, histidine 179, histidine 206, histidine 326, histidine 330, and histidine 366 together coordinate Cu cation. An N-linked (GlcNAc...) asparagine glycan is attached at asparagine 451. A disulfide bond links cysteine 537 and cysteine 585. A glycan (N-linked (GlcNAc...) asparagine) is linked at asparagine 618.

The protein belongs to the tyrosinase family. Hemocyanin subfamily. As to quaternary structure, tarantula hemocyanin is a 24-chain polymer with seven different chains identified. As to expression, hemolymph.

Its subcellular location is the secreted. It is found in the extracellular space. Functionally, hemocyanins are copper-containing oxygen carriers occurring freely dissolved in the hemolymph of many mollusks and arthropods. The chain is Hemocyanin C chain (HCC) from Aphonopelma sp. (American tarantula).